The primary structure comprises 334 residues: Putative B3 domain-containing protein At5g66980 (334 aa).

2 DNA-binding regions (TF-B3) span residues 8-105 (LQFF…FAND) and 218-317 (HPHF…VSGR).

It localises to the nucleus. In Arabidopsis thaliana (Mouse-ear cress), this protein is Putative B3 domain-containing protein At5g66980.